Here is a 276-residue protein sequence, read N- to C-terminus: Checkpoint protein HUS1B (276 aa).

It belongs to the HUS1 family. In terms of assembly, interacts with RAD1 and RAD9B.

The polypeptide is Checkpoint protein HUS1B (Hus1b) (Mus musculus (Mouse)).